Here is an 89-residue protein sequence, read N- to C-terminus: Small ribosomal subunit protein uS15 (89 aa).

Residues 1–24 (MSLDTTEKQQLINSHQTHATDTGS) are disordered. Over residues 8–24 (KQQLINSHQTHATDTGS) the composition is skewed to polar residues.

This sequence belongs to the universal ribosomal protein uS15 family. As to quaternary structure, part of the 30S ribosomal subunit. Forms a bridge to the 50S subunit in the 70S ribosome, contacting the 23S rRNA.

Functionally, one of the primary rRNA binding proteins, it binds directly to 16S rRNA where it helps nucleate assembly of the platform of the 30S subunit by binding and bridging several RNA helices of the 16S rRNA. Its function is as follows. Forms an intersubunit bridge (bridge B4) with the 23S rRNA of the 50S subunit in the ribosome. This is Small ribosomal subunit protein uS15 from Synechococcus sp. (strain CC9311).